The chain runs to 302 residues: Dermonecrotic toxin LiSicTox-alphaIA1bii (302 aa).

Positions 1–14 are cleaved as a signal peptide; sequence ARVVLGCWSVLSQA. A propeptide spanning residues 15–22 is cleaved from the precursor; sequence AQTDDEER. The active site involves His34. The Mg(2+) site is built by Glu54 and Asp56. Catalysis depends on His70, which acts as the Nucleophile. Intrachain disulfides connect Cys74–Cys80 and Cys76–Cys219. Asp114 serves as a coordination point for Mg(2+).

This sequence belongs to the arthropod phospholipase D family. Class II subfamily. Class IIa sub-subfamily. Requires Mg(2+) as cofactor. As to expression, expressed by the venom gland.

It is found in the secreted. It catalyses the reaction an N-(acyl)-sphingosylphosphocholine = an N-(acyl)-sphingosyl-1,3-cyclic phosphate + choline. The enzyme catalyses an N-(acyl)-sphingosylphosphoethanolamine = an N-(acyl)-sphingosyl-1,3-cyclic phosphate + ethanolamine. It carries out the reaction a 1-acyl-sn-glycero-3-phosphocholine = a 1-acyl-sn-glycero-2,3-cyclic phosphate + choline. The catalysed reaction is a 1-acyl-sn-glycero-3-phosphoethanolamine = a 1-acyl-sn-glycero-2,3-cyclic phosphate + ethanolamine. Dermonecrotic toxins cleave the phosphodiester linkage between the phosphate and headgroup of certain phospholipids (sphingolipid and lysolipid substrates), forming an alcohol (often choline) and a cyclic phosphate. This toxin acts on sphingomyelin (SM). It may also act on ceramide phosphoethanolamine (CPE), lysophosphatidylcholine (LPC) and lysophosphatidylethanolamine (LPE), but not on lysophosphatidylserine (LPS), and lysophosphatidylglycerol (LPG). It acts by transphosphatidylation, releasing exclusively cyclic phosphate products as second products. Induces hemolysis, dermonecrosis, vascular permeability and platelet aggregation. The sequence is that of Dermonecrotic toxin LiSicTox-alphaIA1bii from Loxosceles intermedia (Brown spider).